The chain runs to 303 residues: Heme A synthase (303 aa).

The Cytoplasmic portion of the chain corresponds to 1–8; it reads MFGKKNLK. A helical membrane pass occupies residues 9 to 29; sequence WLGVVATLMMTFVQLGGALVT. Topologically, residues 30-67 are extracellular; the sequence is KTGSADGCGSSWPLCHGALIPEFFPIDTIIELSHRAVS. Cys-37 and Cys-44 are joined by a disulfide. The active site involves Glu-60. His-63 contributes to the heme o binding site. The helical transmembrane segment at 68-88 threads the bilayer; it reads ALSLLMVLWLVITAWKHIGYI. Over 89-93 the chain is Cytoplasmic; the sequence is KEIKP. The helical transmembrane segment at 94–114 threads the bilayer; sequence LSIISVGFLLLQALIGAAAVI. The Extracellular segment spans residues 115-125; that stretch reads WQQNDYVLALH. His-125 is a heme o binding site. The chain crosses the membrane as a helical span at residues 126-146; sequence FGISLISFSSVFLITLIIFSI. The Cytoplasmic portion of the chain corresponds to 147–163; it reads DQKYEADELYIKKPLRR. A helical membrane pass occupies residues 164–184; that stretch reads LTWLMAIIIYCGVYTGALVRH. The Extracellular portion of the chain corresponds to 185 to 215; that stretch reads ADASLAYGGWPLPFHDLVPHSEQDWVQLTHR. His-214 contributes to the heme b binding site. Residues 216-236 form a helical membrane-spanning segment; sequence IMAFIVFTIIMITYIHAVKNY. The Cytoplasmic portion of the chain corresponds to 237-244; sequence PNNRTVHY. Residues 245–265 form a helical membrane-spanning segment; that stretch reads GYTAAFILVILQVITGALSIM. The Extracellular portion of the chain corresponds to 266-270; sequence TNVNL. A helical transmembrane segment spans residues 271–291; that stretch reads IIALFHALFITYLFGMTTYFI. His-276 contacts heme b. Over 292-303 the chain is Cytoplasmic; the sequence is MLMLRSVRSDKQ.

This sequence belongs to the COX15/CtaA family. Type 1 subfamily. As to quaternary structure, interacts with CtaB. The cofactor is heme b.

It is found in the cell membrane. The catalysed reaction is Fe(II)-heme o + 2 A + H2O = Fe(II)-heme a + 2 AH2. It functions in the pathway porphyrin-containing compound metabolism; heme A biosynthesis; heme A from heme O: step 1/1. Its function is as follows. Catalyzes the conversion of heme O to heme A by two successive hydroxylations of the methyl group at C8. The first hydroxylation forms heme I, the second hydroxylation results in an unstable dihydroxymethyl group, which spontaneously dehydrates, resulting in the formyl group of heme A. In Staphylococcus aureus (strain Mu3 / ATCC 700698), this protein is Heme A synthase.